The primary structure comprises 533 residues: Thromboxane-A synthase (533 aa).

Over 1–10 the chain is Cytoplasmic; sequence MEALGFLKLE. Residues 11–31 traverse the membrane as a helical segment; it reads VNGPMVTVALSVALLALLKWY. Topologically, residues 32-75 are lumenal; that stretch reads STSAFSRLEKLGLRHPKPSPFIGNLMFFRQGFWESQMELRKLYG. A helical transmembrane segment spans residues 76-96; that stretch reads PLCGYYLGRRMFIVISEPDMI. Over 97-223 the chain is Cytoplasmic; the sequence is KQVLVENFSN…KRFFEFCIPR (127 aa). A helical membrane pass occupies residues 224-244; the sequence is PILVLLLSFPSIMVPLARILP. The Lumenal segment spans residues 245–335; it reads NKNRDELNGF…LTVDEIVGQA (91 aa). Residues 336–356 traverse the membrane as a helical segment; sequence FIFLIAGYEIVTNTLSFATYL. Over 357–533 the chain is Cytoplasmic; sequence LATNPDCQEK…NGVYIKIVSR (177 aa). Cys479 serves as a coordination point for heme.

It belongs to the cytochrome P450 family. Monomer. The cofactor is heme.

It localises to the endoplasmic reticulum membrane. It carries out the reaction prostaglandin H2 = thromboxane A2. The enzyme catalyses prostaglandin H2 = (12S)-hydroxy-(5Z,8E,10E)-heptadecatrienoate + malonaldehyde. It catalyses the reaction a hydroperoxyeicosatetraenoate = an oxoeicosatetraenoate + H2O. The catalysed reaction is (15S)-hydroperoxy-(5Z,8Z,11Z,13E)-eicosatetraenoate = 15-oxo-(5Z,8Z,11Z,13E)-eicosatetraenoate + H2O. It carries out the reaction (15S)-hydroperoxy-(5Z,8Z,11Z,13E)-eicosatetraenoate + AH2 = (15S)-hydroxy-(5Z,8Z,11Z,13E)-eicosatetraenoate + A + H2O. Functionally, catalyzes the conversion of prostaglandin H2 (PGH2) to thromboxane A2 (TXA2), a potent inducer of blood vessel constriction and platelet aggregation. Also cleaves PGH2 to 12-hydroxy-heptadecatrienoicacid (12-HHT) and malondialdehyde, which is known to act as a mediator of DNA damage. 12-HHT and malondialdehyde are formed stoichiometrically in the same amounts as TXA2. Additionally, displays dehydratase activity, toward (15S)-hydroperoxy-(5Z,8Z,11Z,13E)-eicosatetraenoate (15(S)-HPETE) producing 15-KETE and 15-HETE. This is Thromboxane-A synthase (TBXAS1) from Macaca fascicularis (Crab-eating macaque).